The following is a 361-amino-acid chain: uncharacterized protein (361 aa).

Disordered regions lie at residues 53-75 (KNIS…NINN) and 150-211 (NYNN…YHHY). Residues 150–198 (NYNNYNNNNNNNNNNNNNNNNNNNNNNNNNNNNNNKNNNKNNNNKPNNF) are compositionally biased toward low complexity. The segment covering 199–211 (IHHHHHHHHYHHY) has biased composition (basic residues). The helical transmembrane segment at 225–245 (IFIGLMAFLILFILMVIGLLI) threads the bilayer.

Its subcellular location is the membrane. This is an uncharacterized protein from Dictyostelium discoideum (Social amoeba).